The sequence spans 401 residues: Acetate kinase (401 aa).

Asn-10 is a binding site for Mg(2+). Lys-17 contacts ATP. Arg-91 serves as a coordination point for substrate. Asp-150 acts as the Proton donor/acceptor in catalysis. ATP contacts are provided by residues 210–214 (HLGNG), 285–287 (DCR), and 333–337 (GIGEN). Glu-387 lines the Mg(2+) pocket.

The protein belongs to the acetokinase family. Homodimer. Requires Mg(2+) as cofactor. Mn(2+) serves as cofactor.

The protein resides in the cytoplasm. It carries out the reaction acetate + ATP = acetyl phosphate + ADP. It functions in the pathway metabolic intermediate biosynthesis; acetyl-CoA biosynthesis; acetyl-CoA from acetate: step 1/2. In terms of biological role, catalyzes the formation of acetyl phosphate from acetate and ATP. Can also catalyze the reverse reaction. The chain is Acetate kinase from Pasteurella multocida (strain Pm70).